A 619-amino-acid chain; its full sequence is MGKIKKRATSGNAKNFITRTQAIKKLQVSLADFRRLCIFKGIYPREPRNKKKANKGSTAPVTFYYAKDIHYLLHEPVLDKFRQHKTFAKKLQRALGKGEISSAAKLDANRPKYTLNHIIKERYPTFLDALRDLDDPLNMLFLFSNMPAIDKVSTKIIADAEKLCNYWLAYVSKERLLKKMFVSIKGVYYQATIKGQEVRWLIPYKFPTNIPTDVDFRIMLTFLEFYSTLLNFVLYKLYNESGLIYPPHIDIAKLKAAGGLSSYVLQSKDGKNVAILQKKQDDAGSNVEGKELSSAELKKAIKADKDQKDQDTIEDAEEVTEPTVEETELDEFQNGTTNNAVDTLVQPSQFSSPTSQLFSKFIFFIGREVPLDILEFVILSCGGKVISEISLDDLKLNDPKLYASLDLNSITHQISDRKKILQKVPGRTYIQPQWVFDSINKGELVSVGDYAPGETLPPHLSPWGDAGGYDPNAKAQVTAEAEEEEEEEEEDEEEEEEEEEIEVADGDEDQDDEEEEEIEDEDLKAQKELEMEVAGKKFSELQNAEEGSKQKKQKKNASTKAALTPEEEAKELAKIMMTNKQKKLYKKMQYGIEKKTNRVDELTKKRKQLEKKKKQLKDV.

Residues 303-324 (ADKDQKDQDTIEDAEEVTEPTV) are disordered. Acidic residues predominate over residues 312 to 324 (TIEDAEEVTEPTV). The BRCT domain occupies 353-452 (PTSQLFSKFI…ELVSVGDYAP (100 aa)). The tract at residues 456 to 567 (LPPHLSPWGD…STKAALTPEE (112 aa)) is disordered. Coiled coils occupy residues 472–560 (NAKA…ASTK) and 588–619 (MQYG…LKDV). The span at 480 to 522 (EAEEEEEEEEEDEEEEEEEEEIEVADGDEDQDDEEEEEIEDED) shows a compositional bias: acidic residues. Basic and acidic residues predominate over residues 523-539 (LKAQKELEMEVAGKKFS).

This sequence belongs to the pescadillo family. Component of the NOP7 complex, composed of ERB1, NOP7 and YTM1. The complex is held together by ERB1, which interacts with NOP7 via its N-terminal domain and with YTM1 via a high-affinity interaction between the seven-bladed beta-propeller domains of the 2 proteins. The NOP7 complex associates with the 66S pre-ribosome.

The protein resides in the nucleus. Its subcellular location is the nucleolus. The protein localises to the nucleoplasm. Functionally, component of the NOP7 complex, which is required for maturation of the 25S and 5.8S ribosomal RNAs and formation of the 60S ribosome. This Lodderomyces elongisporus (strain ATCC 11503 / CBS 2605 / JCM 1781 / NBRC 1676 / NRRL YB-4239) (Yeast) protein is Pescadillo homolog.